The chain runs to 221 residues: Probable hydrogenase maturation factor HypB (221 aa).

The tract at residues 35–196 (AFDFMGAIGS…KRINPDAEVV (162 aa)) is G-domain. Residues Cys95 and His96 each coordinate Ni(2+). Residues Cys95, His96, His100, His104, and Cys127 each coordinate Zn(2+). A Ni(2+)-binding site is contributed by Cys127.

It belongs to the SIMIBI class G3E GTPase family. HypB/HupM subfamily. Homodimer.

In terms of biological role, involved in the maturation of [NiFe] hydrogenases. Required for nickel insertion into the metal center of the hydrogenase. Exhibits a low intrinsic GTPase activity, which is essential for nickel insertion. The polypeptide is Probable hydrogenase maturation factor HypB (Methanocaldococcus jannaschii (strain ATCC 43067 / DSM 2661 / JAL-1 / JCM 10045 / NBRC 100440) (Methanococcus jannaschii)).